The primary structure comprises 214 residues: MANRVDHEYDYLFKIVLIGDSGVGKSNILSRFTRNEFCLESKSTIGVEFATRTLQVEGKTVKAQIWDTAGQERYRAITSAYYRGAVGALLVYDITKRQTFDNVQRWLRELRDHADSNIVIMMAGNKSDLKHLRAVSEEDGQALAEKEGLSFLETSALEAVNIEKAFQTILTEIYHIISKKALAAQEASSNLPGQGTTINVADASANQRRSCCST.

19-26 is a binding site for GTP; it reads GDSGVGKS. The short motif at 41-49 is the Effector region element; sequence SKSTIGVEF. GTP contacts are provided by residues 67-71 and 125-128; these read DTAGQ and NKSD. Residues Cys211 and Cys212 are each lipidated (S-geranylgeranyl cysteine).

This sequence belongs to the small GTPase superfamily. Rab family.

Its subcellular location is the cell membrane. This is Ras-related protein Rab2BV (RAB2BV) from Beta vulgaris (Sugar beet).